A 304-amino-acid chain; its full sequence is Large ribosomal subunit protein uL18z (304 aa).

The interval 285–304 is disordered; sequence LNALNSSAGADDDDEEEDDE. Residues 294 to 304 show a composition bias toward acidic residues; the sequence is ADDDDEEEDDE.

The protein belongs to the universal ribosomal protein uL18 family. Component of the large ribosomal subunit (LSU).

The protein resides in the cytoplasm. It localises to the nucleus. Functionally, component of the ribosome, a large ribonucleoprotein complex responsible for the synthesis of proteins in the cell. The small ribosomal subunit (SSU) binds messenger RNAs (mRNAs) and translates the encoded message by selecting cognate aminoacyl-transfer RNA (tRNA) molecules. The large subunit (LSU) contains the ribosomal catalytic site termed the peptidyl transferase center (PTC), which catalyzes the formation of peptide bonds, thereby polymerizing the amino acids delivered by tRNAs into a polypeptide chain. The nascent polypeptides leave the ribosome through a tunnel in the LSU and interact with protein factors that function in enzymatic processing, targeting, and the membrane insertion of nascent chains at the exit of the ribosomal tunnel. The chain is Large ribosomal subunit protein uL18z (RPL5A) from Oryza sativa subsp. japonica (Rice).